The primary structure comprises 816 residues: MGSNLPAQPNLRLTIIAADGLYKRDVFRFPDPFAVATVGGEQTHTTSVIKKTLNPYWNEMFDLRVNEDSILAIQIFDQKKFKKKDQGFLGVINVRIGDVIDLQMGGDEMLTRDLKKSNDNLVVHGKLIINLSTNLSTPNTNQANGLHRSHVQSSTSSGLVPQVAPSSSHPAASGAAPVDPSASNPSLNPQRVPSTTRPSSTAAPASAAGAAASNTHGSRTNLSSFEDSQGRLPAGWERREDNLGRTYYVDHNTRTTTWTRPSSNYNEHAQRSQREANMQLERRAHQSRMLPEDRTGANSPNLPESSQQAHTPPAGGSANAVSMMATGATTAGTGELPPGWEQRTTPEGRPYFVDHNTRTTTWVDPRRQQYIRMYGQNANGTNTTIQQQPVSQLGPLPSGWEMRLTNTARVYFVDHNTKTTTWDDPRLPSSLDQGVPQYKRDFRRKLIYFRSQPALRIMSGQCHVKVRRNNIFEDSYAEIMRQSASDLKKRLMIKFDGEDGLDYGGLSREFFFLLSHEMFNPFYCLFEYSAHDNYTLQINPHSGVNPEHLNYFKFIGRVVGLAIFHRRFLDSFFIGAFYKMMLRKKVSLQDMEGVDEDLHRNLTWTLDNDIEGVLELTFSVDDEKFGERRTIDLKPGGRDIPVTNENKAEYVELVTEWKIVKRVEEQFNAFMSGFNELIPADLVNVFDERELELLIGGIADIDVDDWKKHTDYRGYQESDEVIQNFWKVVRSWDAEQKSRLLQFTTGTSRIPVNGFKDLQGSDGPRRFTIEKSGDPAALPKSHTCFNRLDLPPYKSYETLEHKMSIAVEETLGFGQE.

Residues 1-112 enclose the C2 domain; sequence MGSNLPAQPN…QMGGDEMLTR (112 aa). Disordered stretches follow at residues 134-238 and 254-354; these read NLST…GWER and RTTT…YFVD. Low complexity predominate over residues 160–178; the sequence is VPQVAPSSSHPAASGAAPV. Residues 181-192 show a composition bias toward polar residues; sequence SASNPSLNPQRV. Residues 193–213 show a composition bias toward low complexity; that stretch reads PSTTRPSSTAAPASAAGAAAS. 2 stretches are compositionally biased toward polar residues: residues 214–227 and 254–267; these read NTHG…SFED and RTTT…NYNE. The WW 1 domain maps to 230 to 263; the sequence is GRLPAGWERREDNLGRTYYVDHNTRTTTWTRPSS. Residues 268–295 are compositionally biased toward basic and acidic residues; the sequence is HAQRSQREANMQLERRAHQSRMLPEDRT. Over residues 296-310 the composition is skewed to polar residues; that stretch reads GANSPNLPESSQQAH. Residues 325-334 show a composition bias toward low complexity; the sequence is ATGATTAGTG. WW domains follow at residues 334-367 and 394-427; these read GELP…DPRR and GPLP…DPRL. The HECT domain occupies 483–816; the sequence is SASDLKKRLM…VEETLGFGQE (334 aa). Cysteine 784 functions as the Glycyl thioester intermediate in the catalytic mechanism.

Belongs to the RSP5/NEDD4 family. Interacts with creD.

The protein localises to the cytoplasm. The enzyme catalyses S-ubiquitinyl-[E2 ubiquitin-conjugating enzyme]-L-cysteine + [acceptor protein]-L-lysine = [E2 ubiquitin-conjugating enzyme]-L-cysteine + N(6)-ubiquitinyl-[acceptor protein]-L-lysine.. It participates in protein modification; protein ubiquitination. E3 ubiquitin-protein ligase which accepts ubiquitin from an E2 ubiquitin-conjugating enzyme in the form of a thioester and then directly transfers the ubiquitin to targeted substrates. Probably involved in the regulatory network controlling carbon source utilization. The chain is Probable E3 ubiquitin-protein ligase hulA (hulA) from Neosartorya fischeri (strain ATCC 1020 / DSM 3700 / CBS 544.65 / FGSC A1164 / JCM 1740 / NRRL 181 / WB 181) (Aspergillus fischerianus).